The primary structure comprises 153 residues: 3-hydroxyacyl-[acyl-carrier-protein] dehydratase FabZ (153 aa).

His54 is a catalytic residue.

It belongs to the thioester dehydratase family. FabZ subfamily.

The protein localises to the cytoplasm. The enzyme catalyses a (3R)-hydroxyacyl-[ACP] = a (2E)-enoyl-[ACP] + H2O. Its function is as follows. Involved in unsaturated fatty acids biosynthesis. Catalyzes the dehydration of short chain beta-hydroxyacyl-ACPs and long chain saturated and unsaturated beta-hydroxyacyl-ACPs. The protein is 3-hydroxyacyl-[acyl-carrier-protein] dehydratase FabZ of Chlamydia pneumoniae (Chlamydophila pneumoniae).